Reading from the N-terminus, the 249-residue chain is Small ribosomal subunit protein uS3 (249 aa).

The KH type-2 domain occupies 39–108; the sequence is IRQLINKKLA…TVAVNVAEIP (70 aa). Positions 214–249 are disordered; that stretch reads ETFARPQRRDRDERRPEGGDRPARRRPTARRRTGGE. Residues 220–235 show a composition bias toward basic and acidic residues; that stretch reads QRRDRDERRPEGGDRP. Residues 236-249 are compositionally biased toward basic residues; sequence ARRRPTARRRTGGE.

It belongs to the universal ribosomal protein uS3 family. In terms of assembly, part of the 30S ribosomal subunit. Forms a tight complex with proteins S10 and S14.

Functionally, binds the lower part of the 30S subunit head. Binds mRNA in the 70S ribosome, positioning it for translation. The sequence is that of Small ribosomal subunit protein uS3 from Deinococcus radiodurans (strain ATCC 13939 / DSM 20539 / JCM 16871 / CCUG 27074 / LMG 4051 / NBRC 15346 / NCIMB 9279 / VKM B-1422 / R1).